The following is a 244-amino-acid chain: NAD(P)H-hydrate epimerase (244 aa).

The 206-residue stretch at 35 to 240 folds into the YjeF N-terminal domain; the sequence is IREIDSLAME…SIGVPLELLR (206 aa). Residue 82–86 participates in (6S)-NADPHX binding; the sequence is NNGGD. Residues Asn83 and Asp150 each coordinate K(+). Residues 154 to 160, Tyr165, and Asp183 each bind (6S)-NADPHX; that span reads GTGAKPP. Thr186 contributes to the K(+) binding site.

Belongs to the NnrE/AIBP family. K(+) is required as a cofactor.

It catalyses the reaction (6R)-NADHX = (6S)-NADHX. It carries out the reaction (6R)-NADPHX = (6S)-NADPHX. Functionally, catalyzes the epimerization of the S- and R-forms of NAD(P)HX, a damaged form of NAD(P)H that is a result of enzymatic or heat-dependent hydration. This is a prerequisite for the S-specific NAD(P)H-hydrate dehydratase to allow the repair of both epimers of NAD(P)HX. This Rhodopirellula baltica (strain DSM 10527 / NCIMB 13988 / SH1) protein is NAD(P)H-hydrate epimerase.